A 175-amino-acid polypeptide reads, in one-letter code: Anterior gradient protein 2 homolog (175 aa).

The signal sequence occupies residues 1 to 20; that stretch reads MEKFSVSAILLLVAISGTLA. Residues 21-40 form a required to promote cell adhesion region; sequence KDTTVKSGAKKDPKDSRPKL. A disordered region spans residues 24–44; sequence TVKSGAKKDPKDSRPKLPQTL. The span at 29-38 shows a compositional bias: basic and acidic residues; that stretch reads AKKDPKDSRP. 2 consecutive short sequence motifs (homodimer stabilization; interchain) follow at residues 45-54 and 60-67; these read SRGWGDQLIW and EALYRSKT.

Belongs to the AGR family. In terms of assembly, monomer and homodimer. Interacts with LYPD3 and DAG1 (alphaDAG1). Interacts with MUC2; disulfide-linked. Expressed in lung, skeletal muscle, testis, liver, stomach, colon, small intestine, the goblet cells of the intestine and the mucuous neck cells of the stomach.

Its subcellular location is the secreted. The protein resides in the endoplasmic reticulum. Required for MUC2 post-transcriptional synthesis and secretion. May play a role in the production of mucus by intestinal cells. Proto-oncogene that may play a role in cell migration, cell differentiation and cell growth. Promotes cell adhesion. In Mus musculus (Mouse), this protein is Anterior gradient protein 2 homolog (Agr2).